The following is a 520-amino-acid chain: Glucose-1-phosphate adenylyltransferase small subunit, chloroplastic (520 aa).

Residues 1–71 (MASVSAIGVL…RNPIIVSPKA (71 aa)) constitute a chloroplast transit peptide.

This sequence belongs to the bacterial/plant glucose-1-phosphate adenylyltransferase family. Heterotetramer. Leaves.

The protein localises to the plastid. Its subcellular location is the chloroplast. It catalyses the reaction alpha-D-glucose 1-phosphate + ATP + H(+) = ADP-alpha-D-glucose + diphosphate. It participates in glycan biosynthesis; starch biosynthesis. With respect to regulation, activated by 3'phosphoglycerate, inhibited by orthophosphate. Allosteric regulation. This protein plays a role in synthesis of starch. It catalyzes the synthesis of the activated glycosyl donor, ADP-glucose from Glc-1-P and ATP. This chain is Glucose-1-phosphate adenylyltransferase small subunit, chloroplastic (APS1), found in Arabidopsis thaliana (Mouse-ear cress).